The chain runs to 331 residues: D-lactate dehydrogenase (331 aa).

NAD(+) is bound by residues 155 to 156, Asp-175, 206 to 207, Asn-212, 233 to 235, and Asp-259; these read HI, VP, and AAR. Arg-235 is a catalytic residue. The active site involves Glu-264. His-296 functions as the Proton donor in the catalytic mechanism.

It belongs to the D-isomer specific 2-hydroxyacid dehydrogenase family. In terms of assembly, homodimer.

The enzyme catalyses (R)-lactate + NAD(+) = pyruvate + NADH + H(+). This is D-lactate dehydrogenase from Leuconostoc mesenteroides subsp. cremoris.